Here is a 141-residue protein sequence, read N- to C-terminus: Hemoglobin subunit alpha (141 aa).

One can recognise a Globin domain in the interval 1-141 (VLSPADKSNV…VSTVLTSKYR (141 aa)). Ser3 carries the post-translational modification Phosphoserine. 2 positions are modified to N6-succinyllysine: Lys7 and Lys11. At Lys16 the chain carries N6-acetyllysine; alternate. Residue Lys16 is modified to N6-succinyllysine; alternate. Residue Tyr24 is modified to Phosphotyrosine. Residue Ser35 is modified to Phosphoserine. Position 40 is an N6-succinyllysine (Lys40). Phosphoserine is present on Ser49. His58 contacts O2. Heme b is bound at residue His87. Residue Ser102 is modified to Phosphoserine. Residue Thr108 is modified to Phosphothreonine. Phosphoserine occurs at positions 124 and 131. Phosphothreonine is present on residues Thr134 and Thr137. Phosphoserine is present on Ser138.

The protein belongs to the globin family. As to quaternary structure, heterotetramer of two alpha chains and two beta chains. Red blood cells.

Functionally, involved in oxygen transport from the lung to the various peripheral tissues. Its function is as follows. Hemopressin acts as an antagonist peptide of the cannabinoid receptor CNR1. Hemopressin-binding efficiently blocks cannabinoid receptor CNR1 and subsequent signaling. In Leontocebus fuscicollis (Brown-mantled tamarin), this protein is Hemoglobin subunit alpha (HBA).